The following is a 453-amino-acid chain: Probable glycine dehydrogenase (decarboxylating) subunit 1 (453 aa).

The protein belongs to the GcvP family. N-terminal subunit subfamily. As to quaternary structure, the glycine cleavage system is composed of four proteins: P, T, L and H. In this organism, the P 'protein' is a heterodimer of two subunits.

The enzyme catalyses N(6)-[(R)-lipoyl]-L-lysyl-[glycine-cleavage complex H protein] + glycine + H(+) = N(6)-[(R)-S(8)-aminomethyldihydrolipoyl]-L-lysyl-[glycine-cleavage complex H protein] + CO2. The glycine cleavage system catalyzes the degradation of glycine. The P protein binds the alpha-amino group of glycine through its pyridoxal phosphate cofactor; CO(2) is released and the remaining methylamine moiety is then transferred to the lipoamide cofactor of the H protein. This chain is Probable glycine dehydrogenase (decarboxylating) subunit 1, found in Dictyoglomus thermophilum (strain ATCC 35947 / DSM 3960 / H-6-12).